The sequence spans 233 residues: Zinc import ATP-binding protein ZnuC (233 aa).

The ABC transporter domain maps to 6 to 222 (IEFRNVSKKF…SEFSNALSAL (217 aa)). Position 38–45 (38–45 (GPNGAGKT)) interacts with ATP.

This sequence belongs to the ABC transporter superfamily. Zinc importer (TC 3.A.1.15.5) family. As to quaternary structure, the complex is composed of two ATP-binding proteins (ZnuC), two transmembrane proteins (ZnuB) and a solute-binding protein (ZnuA).

The protein localises to the cell inner membrane. It carries out the reaction Zn(2+)(out) + ATP(in) + H2O(in) = Zn(2+)(in) + ADP(in) + phosphate(in) + H(+)(in). Part of the ABC transporter complex ZnuABC involved in zinc import. Responsible for energy coupling to the transport system. The sequence is that of Zinc import ATP-binding protein ZnuC from Rickettsia conorii (strain ATCC VR-613 / Malish 7).